The primary structure comprises 1495 residues: Nuclear pore complex protein NUP160 (1495 aa).

In terms of assembly, part of the nuclear pore complex (NPC). The NPC has an eight-fold symmetrical structure comprising a central transport channel and two rings, the cytoplasmic and nuclear rings, to which eight filaments are attached. The cytoplasmic filaments have loose ends, while the nuclear filaments are joined in a distal ring, forming a nuclear basket. NPCs are highly dynamic in configuration and composition, and can be devided in 3 subcomplexes, the NUP62 subcomplex, the NUP107-160 subcomplex and the NUP93 subcomplex, containing approximately 30 different nucleoporin proteins. As to expression, expressed in roots, stems, anthers, siliques and vascular tissues of cotyledons, leaves and hypocotyls.

It is found in the nucleus membrane. Its subcellular location is the nucleus. The protein resides in the nuclear pore complex. In terms of biological role, contributes to the transfer of mature mRNA from the nucleus to the cytosol. Required for both R gene-mediated and basal disease resistance. RNA export seems to play a critical role in stress responses and regulation of plant growth and development. Required for proper expression of factors associated with auxin signaling. This chain is Nuclear pore complex protein NUP160, found in Arabidopsis thaliana (Mouse-ear cress).